Consider the following 282-residue polypeptide: Aldo-keto reductase MT3049 (282 aa).

Tyr57 (proton donor) is an active-site residue. The NADPH site is built by Leu197, Val235, Arg237, Ser238, Ala239, Arg243, Ser246, Asn247, and Arg273.

It belongs to the aldo/keto reductase family.

The chain is Aldo-keto reductase MT3049 from Mycobacterium tuberculosis (strain CDC 1551 / Oshkosh).